Here is a 90-residue protein sequence, read N- to C-terminus: Large ribosomal subunit protein bL27 (90 aa).

Residues 1 to 24 (MAHKKGTGSTRNGRDSNSKRLGVK) form a disordered region.

The protein belongs to the bacterial ribosomal protein bL27 family.

This chain is Large ribosomal subunit protein bL27, found in Prochlorococcus marinus (strain NATL1A).